A 1366-amino-acid polypeptide reads, in one-letter code: DNA-directed RNA polymerase subunit beta'' (1366 aa).

Residues Cys220, Cys291, Cys298, and Cys301 each coordinate Zn(2+).

Belongs to the RNA polymerase beta' chain family. RpoC2 subfamily. In plastids the minimal PEP RNA polymerase catalytic core is composed of four subunits: alpha, beta, beta', and beta''. When a (nuclear-encoded) sigma factor is associated with the core the holoenzyme is formed, which can initiate transcription. The cofactor is Zn(2+).

It localises to the plastid. Its subcellular location is the chloroplast. It catalyses the reaction RNA(n) + a ribonucleoside 5'-triphosphate = RNA(n+1) + diphosphate. DNA-dependent RNA polymerase catalyzes the transcription of DNA into RNA using the four ribonucleoside triphosphates as substrates. In Phaseolus vulgaris (Kidney bean), this protein is DNA-directed RNA polymerase subunit beta''.